The sequence spans 424 residues: Enolase (424 aa).

Gln-162 provides a ligand contact to (2R)-2-phosphoglycerate. Glu-204 functions as the Proton donor in the catalytic mechanism. 3 residues coordinate Mg(2+): Asp-241, Glu-284, and Asp-311. The (2R)-2-phosphoglycerate site is built by Lys-336, Arg-365, Ser-366, and Lys-387. The active-site Proton acceptor is the Lys-336.

This sequence belongs to the enolase family. It depends on Mg(2+) as a cofactor.

The protein resides in the cytoplasm. The protein localises to the secreted. It is found in the cell surface. The catalysed reaction is (2R)-2-phosphoglycerate = phosphoenolpyruvate + H2O. The protein operates within carbohydrate degradation; glycolysis; pyruvate from D-glyceraldehyde 3-phosphate: step 4/5. In terms of biological role, catalyzes the reversible conversion of 2-phosphoglycerate (2-PG) into phosphoenolpyruvate (PEP). It is essential for the degradation of carbohydrates via glycolysis. The chain is Enolase from Chelativorans sp. (strain BNC1).